The following is a 209-amino-acid chain: Auxin-binding protein ABP19a (209 aa).

A signal peptide spans Met-1–Ala-18. Residues Cys-24 and Cys-39 are joined by a disulfide bond. A Cupin type-1 domain is found at Ser-53–Lys-199. Asn-60 carries an N-linked (GlcNAc...) asparagine glycan. Mn(2+) is bound by residues His-101, His-103, Glu-108, and His-147.

This sequence belongs to the germin family. In terms of assembly, interacts with ABP20.

It is found in the secreted. Its subcellular location is the extracellular space. The protein resides in the apoplast. The protein localises to the cell wall. Its function is as follows. Probable receptor for the plant growth-promoting hormone auxin. The chain is Auxin-binding protein ABP19a (ABP19A) from Prunus persica (Peach).